A 279-amino-acid polypeptide reads, in one-letter code: Glutamate racemase (279 aa).

Substrate contacts are provided by residues 13 to 14 (DS) and 45 to 46 (YG). Cysteine 76 acts as the Proton donor/acceptor in catalysis. 77–78 (NT) lines the substrate pocket. Cysteine 185 acts as the Proton donor/acceptor in catalysis. 186–187 (TH) contacts substrate.

It belongs to the aspartate/glutamate racemases family.

It carries out the reaction L-glutamate = D-glutamate. Its pathway is cell wall biogenesis; peptidoglycan biosynthesis. Its function is as follows. Provides the (R)-glutamate required for cell wall biosynthesis. The protein is Glutamate racemase of Picosynechococcus sp. (strain ATCC 27264 / PCC 7002 / PR-6) (Agmenellum quadruplicatum).